A 110-amino-acid chain; its full sequence is Large ribosomal subunit protein uL22 (110 aa).

Belongs to the universal ribosomal protein uL22 family. As to quaternary structure, part of the 50S ribosomal subunit.

Functionally, this protein binds specifically to 23S rRNA; its binding is stimulated by other ribosomal proteins, e.g. L4, L17, and L20. It is important during the early stages of 50S assembly. It makes multiple contacts with different domains of the 23S rRNA in the assembled 50S subunit and ribosome. The globular domain of the protein is located near the polypeptide exit tunnel on the outside of the subunit, while an extended beta-hairpin is found that lines the wall of the exit tunnel in the center of the 70S ribosome. This Geobacter metallireducens (strain ATCC 53774 / DSM 7210 / GS-15) protein is Large ribosomal subunit protein uL22.